We begin with the raw amino-acid sequence, 171 residues long: Allophycocyanin subunit beta-18 (171 aa).

Asn72 carries the N4-methylasparagine modification. Position 82 (Cys82) interacts with (2R,3E)-phycocyanobilin.

Belongs to the phycobiliprotein family. In terms of assembly, heterodimer of an alpha and a beta chain. In terms of processing, contains one covalently linked bilin chromophore.

Its subcellular location is the plastid. The protein resides in the chloroplast thylakoid membrane. Functionally, light-harvesting photosynthetic bile pigment-protein from the phycobiliprotein complex. Allophycocyanin has a maximum absorption at approximately 650 nanometers. This is Allophycocyanin subunit beta-18 (apcF) from Aglaothamnion neglectum (Red alga).